The primary structure comprises 251 residues: 5'-nucleotidase SurE (251 aa).

Positions 8, 9, 39, and 91 each coordinate a divalent metal cation.

The protein belongs to the SurE nucleotidase family. A divalent metal cation serves as cofactor.

It localises to the cytoplasm. The catalysed reaction is a ribonucleoside 5'-phosphate + H2O = a ribonucleoside + phosphate. Functionally, nucleotidase that shows phosphatase activity on nucleoside 5'-monophosphates. This is 5'-nucleotidase SurE from Thioalkalivibrio sulfidiphilus (strain HL-EbGR7).